The chain runs to 379 residues: Chaperone protein DnaJ (379 aa).

The region spanning 5–70 (DYYEILGVSK…QKRAAYDQYG (66 aa)) is the J domain. The CR-type zinc-finger motif lies at 134–212 (GVTKEIRIPT…CHGHGRVEKS (79 aa)). Cys147, Cys150, Cys164, Cys167, Cys186, Cys189, Cys200, and Cys203 together coordinate Zn(2+). CXXCXGXG motif repeat units follow at residues 147-154 (CDVCHGSG), 164-171 (CPTCHGSG), 186-193 (CPHCQGRG), and 200-207 (CHKCHGHG).

Belongs to the DnaJ family. Homodimer. It depends on Zn(2+) as a cofactor.

It is found in the cytoplasm. Its function is as follows. Participates actively in the response to hyperosmotic and heat shock by preventing the aggregation of stress-denatured proteins and by disaggregating proteins, also in an autonomous, DnaK-independent fashion. Unfolded proteins bind initially to DnaJ; upon interaction with the DnaJ-bound protein, DnaK hydrolyzes its bound ATP, resulting in the formation of a stable complex. GrpE releases ADP from DnaK; ATP binding to DnaK triggers the release of the substrate protein, thus completing the reaction cycle. Several rounds of ATP-dependent interactions between DnaJ, DnaK and GrpE are required for fully efficient folding. Also involved, together with DnaK and GrpE, in the DNA replication of plasmids through activation of initiation proteins. The polypeptide is Chaperone protein DnaJ (Salmonella agona (strain SL483)).